The sequence spans 355 residues: UDP-N-acetylglucosamine--N-acetylmuramyl-(pentapeptide) pyrophosphoryl-undecaprenol N-acetylglucosamine transferase (355 aa).

Residues 15 to 17, Asn-127, Arg-163, Ser-191, Ile-244, 263 to 268, and Gln-288 contribute to the UDP-N-acetyl-alpha-D-glucosamine site; these read TGG and ALTVSE.

Belongs to the glycosyltransferase 28 family. MurG subfamily.

It is found in the cell inner membrane. It carries out the reaction di-trans,octa-cis-undecaprenyl diphospho-N-acetyl-alpha-D-muramoyl-L-alanyl-D-glutamyl-meso-2,6-diaminopimeloyl-D-alanyl-D-alanine + UDP-N-acetyl-alpha-D-glucosamine = di-trans,octa-cis-undecaprenyl diphospho-[N-acetyl-alpha-D-glucosaminyl-(1-&gt;4)]-N-acetyl-alpha-D-muramoyl-L-alanyl-D-glutamyl-meso-2,6-diaminopimeloyl-D-alanyl-D-alanine + UDP + H(+). It participates in cell wall biogenesis; peptidoglycan biosynthesis. In terms of biological role, cell wall formation. Catalyzes the transfer of a GlcNAc subunit on undecaprenyl-pyrophosphoryl-MurNAc-pentapeptide (lipid intermediate I) to form undecaprenyl-pyrophosphoryl-MurNAc-(pentapeptide)GlcNAc (lipid intermediate II). This chain is UDP-N-acetylglucosamine--N-acetylmuramyl-(pentapeptide) pyrophosphoryl-undecaprenol N-acetylglucosamine transferase, found in Escherichia coli O139:H28 (strain E24377A / ETEC).